Reading from the N-terminus, the 415-residue chain is Gamma-glutamyl phosphate reductase (415 aa).

It belongs to the gamma-glutamyl phosphate reductase family.

Its subcellular location is the cytoplasm. It carries out the reaction L-glutamate 5-semialdehyde + phosphate + NADP(+) = L-glutamyl 5-phosphate + NADPH + H(+). Its pathway is amino-acid biosynthesis; L-proline biosynthesis; L-glutamate 5-semialdehyde from L-glutamate: step 2/2. Its function is as follows. Catalyzes the NADPH-dependent reduction of L-glutamate 5-phosphate into L-glutamate 5-semialdehyde and phosphate. The product spontaneously undergoes cyclization to form 1-pyrroline-5-carboxylate. The protein is Gamma-glutamyl phosphate reductase of Ligilactobacillus salivarius (strain UCC118) (Lactobacillus salivarius).